A 309-amino-acid polypeptide reads, in one-letter code: Olfactory receptor 1A1 (309 aa).

The Extracellular portion of the chain corresponds to 1–25; the sequence is MRENNQSSTLEFILLGVTGQQEQED. An N-linked (GlcNAc...) asparagine glycan is attached at asparagine 5. Residues 26–49 traverse the membrane as a helical segment; sequence FFYILFLFIYPITLIGNLLIVLAI. The Cytoplasmic portion of the chain corresponds to 50 to 57; it reads CSDVRLHN. A helical membrane pass occupies residues 58 to 79; sequence PMYFLLANLSLVDIFFSSVTIP. The Extracellular segment spans residues 80 to 100; the sequence is KMLANHLLGSKSISFGGCLTQ. Cysteines 97 and 189 form a disulfide. A helical membrane pass occupies residues 101 to 120; it reads MYFMIALGNTDSYILAAMAY. The Cytoplasmic portion of the chain corresponds to 121 to 139; it reads DRAVAISRPLHYTTIMSPR. The chain crosses the membrane as a helical span at residues 140–158; that stretch reads SCIWLIAGSWVIGNANALP. Residues 159 to 195 lie on the Extracellular side of the membrane; that stretch reads HTLLTASLSFCGNQEVANFYCDITPLLKLSCSDIHFH. The chain crosses the membrane as a helical span at residues 196–218; that stretch reads VKMMYLGVGIFSVPLLCIIVSYI. Residues 219 to 235 are Cytoplasmic-facing; that stretch reads RVFSTVFQVPSTKGVLK. A helical transmembrane segment spans residues 236 to 258; that stretch reads AFSTCGSHLTVVSLYYGTVMGTY. The Extracellular portion of the chain corresponds to 259-270; sequence FRPLTNYSLKDA. Asparagine 264 is a glycosylation site (N-linked (GlcNAc...) asparagine). A helical transmembrane segment spans residues 271-290; it reads VITVMYTAVTPMLNPFIYSL. The Cytoplasmic portion of the chain corresponds to 291–309; sequence RNRDMKAALRKLFNKRISS.

The protein belongs to the G-protein coupled receptor 1 family.

Its subcellular location is the cell membrane. Odorant receptor. This Homo sapiens (Human) protein is Olfactory receptor 1A1 (OR1A1).